The chain runs to 412 residues: [Pyruvate dehydrogenase (acetyl-transferring)] kinase isozyme 4, mitochondrial (412 aa).

The 231-residue stretch at I138–S368 folds into the Histidine kinase domain. Residues E254–R261, D293, S312–T313, and G329–L334 each bind ATP.

Belongs to the PDK/BCKDK protein kinase family. As to quaternary structure, homodimer. Interacts with the pyruvate dehydrogenase complex subunit DLAT, and is part of the multimeric pyruvate dehydrogenase complex that contains multiple copies of pyruvate dehydrogenase (E1), dihydrolipoamide acetyltransferase (DLAT, E2) and lipoamide dehydrogenase (DLD, E3).

Its subcellular location is the mitochondrion matrix. It carries out the reaction L-seryl-[pyruvate dehydrogenase E1 alpha subunit] + ATP = O-phospho-L-seryl-[pyruvate dehydrogenase E1 alpha subunit] + ADP + H(+). Functionally, kinase that plays a key role in regulation of glucose and fatty acid metabolism and homeostasis via phosphorylation of the pyruvate dehydrogenase subunits PDHA1 and PDHA2. This inhibits pyruvate dehydrogenase activity, and thereby regulates metabolite flux through the tricarboxylic acid cycle, down-regulates aerobic respiration and inhibits the formation of acetyl-coenzyme A from pyruvate. Inhibition of pyruvate dehydrogenase decreases glucose utilization and increases fat metabolism in response to prolonged fasting and starvation. Plays an important role in maintaining normal blood glucose levels under starvation, and is involved in the insulin signaling cascade. Via its regulation of pyruvate dehydrogenase activity, plays an important role in maintaining normal blood pH and in preventing the accumulation of ketone bodies under starvation. In the fed state, mediates cellular responses to glucose levels and to a high-fat diet. Regulates both fatty acid oxidation and de novo fatty acid biosynthesis. Plays a role in the generation of reactive oxygen species. Protects detached epithelial cells against anoikis. Plays a role in cell proliferation via its role in regulating carbohydrate and fatty acid metabolism. In Mus musculus (Mouse), this protein is [Pyruvate dehydrogenase (acetyl-transferring)] kinase isozyme 4, mitochondrial (Pdk4).